The chain runs to 189 residues: dCTP deaminase (189 aa).

DCTP-binding positions include 112–117 (KSTYAR), 136–138 (TLE), Gln157, Tyr171, and Gln181. Glu138 (proton donor/acceptor) is an active-site residue.

The protein belongs to the dCTP deaminase family. In terms of assembly, homotrimer.

The enzyme catalyses dCTP + H2O + H(+) = dUTP + NH4(+). Its pathway is pyrimidine metabolism; dUMP biosynthesis; dUMP from dCTP (dUTP route): step 1/2. In terms of biological role, catalyzes the deamination of dCTP to dUTP. The protein is dCTP deaminase of Albidiferax ferrireducens (strain ATCC BAA-621 / DSM 15236 / T118) (Rhodoferax ferrireducens).